Here is a 208-residue protein sequence, read N- to C-terminus: Outer-membrane lipoprotein carrier protein (208 aa).

The first 22 residues, 1–22, serve as a signal peptide directing secretion; it reads MKKRLCAVLLASPLLFSAAVFA.

Belongs to the LolA family. In terms of assembly, monomer.

Its subcellular location is the periplasm. Functionally, participates in the translocation of lipoproteins from the inner membrane to the outer membrane. Only forms a complex with a lipoprotein if the residue after the N-terminal Cys is not an aspartate (The Asp acts as a targeting signal to indicate that the lipoprotein should stay in the inner membrane). This is Outer-membrane lipoprotein carrier protein from Shewanella baltica (strain OS195).